The primary structure comprises 377 residues: UPF0754 membrane protein GK0639 (377 aa).

The next 2 membrane-spanning stretches (helical) occupy residues 7–27 (LLFM…IAIV) and 357–377 (YLGA…GLWL).

The protein belongs to the UPF0754 family.

It is found in the cell membrane. This chain is UPF0754 membrane protein GK0639, found in Geobacillus kaustophilus (strain HTA426).